Reading from the N-terminus, the 236-residue chain is MKMMDANEIISFIQNSTKSTPVKVYVKGDLEGISFGDSAKTFLNGQSGVVFGEWAEIKSVIEENKDKIEDYVIENDRRNSAIPMLDLKDVKARIEPGAIIRDQVEIGDNAVIMMGASINIGSVIGEGTMIDMNVVLGGRATVGKNCHIGAGSVLAGVIEPPSAKPVVVEDDVVIGANAVVLEGVTIGKGAVVAAGAIVVNDVEPYTVVAGTPAKKIKDIDEKTKGKTEIKQELRQL.

The protein belongs to the transferase hexapeptide repeat family. DapH subfamily.

The catalysed reaction is (S)-2,3,4,5-tetrahydrodipicolinate + acetyl-CoA + H2O = L-2-acetamido-6-oxoheptanedioate + CoA. Its pathway is amino-acid biosynthesis; L-lysine biosynthesis via DAP pathway; LL-2,6-diaminopimelate from (S)-tetrahydrodipicolinate (acetylase route): step 1/3. In terms of biological role, catalyzes the transfer of an acetyl group from acetyl-CoA to tetrahydrodipicolinate. In Bacillus velezensis (strain DSM 23117 / BGSC 10A6 / LMG 26770 / FZB42) (Bacillus amyloliquefaciens subsp. plantarum), this protein is 2,3,4,5-tetrahydropyridine-2,6-dicarboxylate N-acetyltransferase.